The sequence spans 210 residues: Putative 3-methyladenine DNA glycosylase (210 aa).

It belongs to the DNA glycosylase MPG family.

This is Putative 3-methyladenine DNA glycosylase from Lactobacillus helveticus (strain DPC 4571).